We begin with the raw amino-acid sequence, 92 residues long: Cell division protein FtsB (92 aa).

Over 1–3 the chain is Cytoplasmic; sequence MRL. Residues 4-21 traverse the membrane as a helical segment; it reads FVFFMLCLLVLLQYHLWF. The Periplasmic segment spans residues 22–92; that stretch reads GKNGLGDRHN…TFFRIVPKED (71 aa). A coiled-coil region spans residues 28-62; it reads DRHNLQEEVTLILENNSELRQRNQMMFSEIKDLKE.

Belongs to the FtsB family. In terms of assembly, part of a complex composed of FtsB, FtsL and FtsQ.

It is found in the cell inner membrane. Essential cell division protein. May link together the upstream cell division proteins, which are predominantly cytoplasmic, with the downstream cell division proteins, which are predominantly periplasmic. This is Cell division protein FtsB from Psychromonas ingrahamii (strain DSM 17664 / CCUG 51855 / 37).